The primary structure comprises 468 residues: Probable acid phosphatase DIA3 (468 aa).

An N-terminal signal peptide occupies residues M1–S20. H76 acts as the Nucleophile in catalysis. N-linked (GlcNAc...) asparagine glycosylation is found at N98, N163, N193, N202, N238, N251, and N316. D339 functions as the Proton donor in the catalytic mechanism. N-linked (GlcNAc...) asparagine glycans are attached at residues N357, N391, N457, and N462.

Belongs to the histidine acid phosphatase family.

It catalyses the reaction a phosphate monoester + H2O = an alcohol + phosphate. In Saccharomyces cerevisiae (strain ATCC 204508 / S288c) (Baker's yeast), this protein is Probable acid phosphatase DIA3 (DIA3).